The sequence spans 347 residues: NADH-ubiquinone oxidoreductase chain 2 (347 aa).

11 helical membrane passes run 3–23 (PPIL…VMLS), 25–45 (HWLL…PVLM), 66–86 (ASML…QWVV), 96–116 (IMMT…FWVP), 122–142 (ITLT…MSVL), 149–169 (INTN…GWGG), 178–198 (IMAY…IYNP), 201–221 (MILN…LFML), 237–257 (FPLI…LPPL), 274–294 (NMII…YFYL), and 323–343 (TILL…TPML).

This sequence belongs to the complex I subunit 2 family. As to quaternary structure, core subunit of respiratory chain NADH dehydrogenase (Complex I) which is composed of 45 different subunits. Interacts with TMEM242.

It localises to the mitochondrion inner membrane. The catalysed reaction is a ubiquinone + NADH + 5 H(+)(in) = a ubiquinol + NAD(+) + 4 H(+)(out). Functionally, core subunit of the mitochondrial membrane respiratory chain NADH dehydrogenase (Complex I) which catalyzes electron transfer from NADH through the respiratory chain, using ubiquinone as an electron acceptor. Essential for the catalytic activity and assembly of complex I. This Canis rufus (Red wolf) protein is NADH-ubiquinone oxidoreductase chain 2.